Here is a 212-residue protein sequence, read N- to C-terminus: Large ribosomal subunit protein uL3 (212 aa).

The residue at position 153 (Gln-153) is an N5-methylglutamine.

The protein belongs to the universal ribosomal protein uL3 family. Part of the 50S ribosomal subunit. Forms a cluster with proteins L14 and L19. Post-translationally, methylated by PrmB.

Functionally, one of the primary rRNA binding proteins, it binds directly near the 3'-end of the 23S rRNA, where it nucleates assembly of the 50S subunit. The protein is Large ribosomal subunit protein uL3 of Shewanella loihica (strain ATCC BAA-1088 / PV-4).